We begin with the raw amino-acid sequence, 189 residues long: MIEAKDRLIDKMLESGAILFGHFVLSSGKESDYYINVKKVVTDPDALELMAGLIAGLVQRVGIDFDRVAGPELGAVPIATAVSLKTGKPLVIVRKKPKGYGTGSQIEGDVKEGDRILLVEDVTTTGGSVLRAAEVLESLGARIAAIAVVVDREEGAEGSITSKGYTFLPVIRVSELLERKETVKGRESD.

Residues Arg94, Lys95, Lys98, and 120-128 (EDVTTTGGS) each bind 5-phospho-alpha-D-ribose 1-diphosphate. The orotate site is built by Thr124 and Arg152.

This sequence belongs to the purine/pyrimidine phosphoribosyltransferase family. PyrE subfamily. In terms of assembly, homodimer. Mg(2+) serves as cofactor.

It catalyses the reaction orotidine 5'-phosphate + diphosphate = orotate + 5-phospho-alpha-D-ribose 1-diphosphate. Its pathway is pyrimidine metabolism; UMP biosynthesis via de novo pathway; UMP from orotate: step 1/2. Catalyzes the transfer of a ribosyl phosphate group from 5-phosphoribose 1-diphosphate to orotate, leading to the formation of orotidine monophosphate (OMP). The sequence is that of Orotate phosphoribosyltransferase from Thermococcus gammatolerans (strain DSM 15229 / JCM 11827 / EJ3).